The sequence spans 341 residues: Phenylalanine--tRNA ligase alpha subunit (341 aa).

Glu256 provides a ligand contact to Mg(2+).

This sequence belongs to the class-II aminoacyl-tRNA synthetase family. Phe-tRNA synthetase alpha subunit type 1 subfamily. As to quaternary structure, tetramer of two alpha and two beta subunits. The cofactor is Mg(2+).

The protein resides in the cytoplasm. The catalysed reaction is tRNA(Phe) + L-phenylalanine + ATP = L-phenylalanyl-tRNA(Phe) + AMP + diphosphate + H(+). This is Phenylalanine--tRNA ligase alpha subunit from Chlamydia caviae (strain ATCC VR-813 / DSM 19441 / 03DC25 / GPIC) (Chlamydophila caviae).